We begin with the raw amino-acid sequence, 581 residues long: Glutamyl-tRNA reductase (581 aa).

Substrate contacts are provided by residues 49-52, Ser109, 114-116, and Gln120; these read TCNR and EGQ. Cys50 acts as the Nucleophile in catalysis. 192–197 is an NADP(+) binding site; that stretch reads GAGSMS. Positions 292-416 are insert; it reads PAVEDTAVQE…AEAPRPQPVL (125 aa).

This sequence belongs to the glutamyl-tRNA reductase family. In terms of assembly, homodimer.

The enzyme catalyses (S)-4-amino-5-oxopentanoate + tRNA(Glu) + NADP(+) = L-glutamyl-tRNA(Glu) + NADPH + H(+). The protein operates within porphyrin-containing compound metabolism; protoporphyrin-IX biosynthesis; 5-aminolevulinate from L-glutamyl-tRNA(Glu): step 1/2. Functionally, catalyzes the NADPH-dependent reduction of glutamyl-tRNA(Glu) to glutamate 1-semialdehyde (GSA). The polypeptide is Glutamyl-tRNA reductase (Streptomyces coelicolor (strain ATCC BAA-471 / A3(2) / M145)).